Here is a 1006-residue protein sequence, read N- to C-terminus: MSRRKQSNPRQIKRSLGDMEAREEVQLVGASHMEQKATAPEAPSPPSADVNSPPPLPPPTSPGGPKELEGQEPEPRPTEEEPGSPWSGPDELEPVVQDGQRRIRARLSLATGLSWGPFHGSVQTRASSPRQAEPSPALTLLLVDEACWLRTLPQALTEAEANTEIHRKDDALWCRVTKPVPAGGLLSVLLTAEPHSTPGHPVKKEPAEPTCPAPAHDLQLLPQQAGMASILATAVINKDVFPCKDCGIWYRSERNLQAHLLYYCASRQGTGSPAAAATDEKPKETYPNERVCPFPQCRKSCPSASSLEIHMRSHSGERPFVCLICLSAFTTKANCERHLKVHTDTLSGVCHSCGFISTTRDILYSHLVTNHMVCQPGSKGEIYSPGAGHPATKLPPDSLGSFQQQHTALQGPLASADLGLAPTPSPGLDRKALAEATNGEARAEPLAQNGGSSEPPAAPRSIKVEAVEEPEAAPILGPGEPGPQAPSRTPSPRSPAPARVKAELSSPTPGSSPVPGELGLAGALFLPQYVFGPDAAPPASEILAKMSELVHSRLQQGAGAGAGGAQTGLFPGAPKGATCFECEITFSNVNNYYVHKRLYCSGRRAPEDAPAARRPKAPPGPARAPPGQPAEPDAPRSSPGPGAREEGAGGAATPEDGAGGRGSEGSQSPGSSVDDAEDDPSRTLCEACNIRFSRHETYTVHKRYYCASRHDPPPRRPAAPPGPPGPAAPPAPSPAAPVRTRRRRKLYELHAAGAPPPPPPGHAPAPESPRPGSGSGSGPGLAPARSPGPAADGPIDLSKKPRRPLPGAPAPALADYHECTACRVSFHSLEAYLAHKKYSCPAAPPPGALGLPAAACPYCPPNGPVRGDLLEHFRLAHGLLLGAPLAGPGVEARTPADRGPSPAPAPAASPQPGSRGPRDGLGPEPQEPPPGPPPSPAAAPEAVPPPPAPPSYSDKGVQTPSKGTPAPLPNGNHRYCRLCNIKFSSLSTFIAHKKYYCSSHAAEHVK.

Residues 1–13 show a composition bias toward basic residues; sequence MSRRKQSNPRQIK. Disordered regions lie at residues 1 to 93 and 114 to 133; these read MSRR…DELE and SWGPFHGSVQTRASSPRQAE. Residues 15 to 25 show a composition bias toward basic and acidic residues; it reads SLGDMEAREEV. The span at 42–62 shows a compositional bias: pro residues; the sequence is APSPPSADVNSPPPLPPPTSP. The span at 66–79 shows a compositional bias: basic and acidic residues; the sequence is KELEGQEPEPRPTE. A phosphoserine mark is found at Ser84 and Ser128. Over residues 121–130 the composition is skewed to polar residues; the sequence is SVQTRASSPR. Residues 235 to 268 form a CCHC FOG-type 1 zinc finger; sequence VINKDVFPCKDCGIWYRSERNLQAHLLYYCASRQ. Positions 243, 246, 259, and 264 each coordinate Zn(2+). Position 272 is a phosphoserine (Ser272). C2H2-type zinc fingers lie at residues 290–314, 320–342, and 348–371; these read RVCPFPQCRKSCPSASSLEIHMRSH, FVCLICLSAFTTKANCERHLKVH, and GVCHSCGFISTTRDILYSHLVTNH. An interaction with TACC3 region spans residues 330-341; it reads TTKANCERHLKV. Position 384 is a phosphoserine (Ser384). 3 disordered regions span residues 384–409, 438–460, and 473–515; these read SPGAGHPATKLPPDSLGSFQQQHTAL, NGEARAEPLAQNGGSSEPPAAPR, and APIL…SPVP. Positions 485-515 are enriched in low complexity; sequence APSRTPSPRSPAPARVKAELSSPTPGSSPVP. Ser491 and Ser494 each carry phosphoserine. The segment at 571 to 604 adopts a CCHC FOG-type 2 zinc-finger fold; sequence PGAPKGATCFECEITFSNVNNYYVHKRLYCSGRR. Residues Cys579, Cys582, His595, and Cys600 each contribute to the Zn(2+) site. The disordered stretch occupies residues 605–681; the sequence is APEDAPAARR…SVDDAEDDPS (77 aa). The span at 617-629 shows a compositional bias: pro residues; that stretch reads APPGPARAPPGQP. Residues Ser638 and Ser671 each carry the phosphoserine modification. The CCHC FOG-type 3 zinc-finger motif lies at 677–710; sequence EDDPSRTLCEACNIRFSRHETYTVHKRYYCASRH. Residues Cys685, Cys688, His701, and Cys706 each coordinate Zn(2+). Residues 708-810 form a disordered region; that stretch reads SRHDPPPRRP…PRRPLPGAPA (103 aa). Pro residues-rich tracts occupy residues 715–735 and 754–769; these read RRPAAPPGPPGPAAPPAPSPA and APPPPPPGHAPAPESP. Residues 780–791 are compositionally biased toward low complexity; sequence GLAPARSPGPAA. The residue at position 786 (Ser786) is a Phosphoserine. The segment at 794–800 is interaction with CTBP2; the sequence is PIDLSKK. The segment at 811–844 adopts a CCHC FOG-type 4 zinc-finger fold; sequence PALADYHECTACRVSFHSLEAYLAHKKYSCPAAP. Cys819, Cys822, His835, and Cys840 together coordinate Zn(2+). The C2H2-type 4 zinc-finger motif lies at 854-877; sequence AACPYCPPNGPVRGDLLEHFRLAH. The interval 889–971 is disordered; the sequence is GVEARTPADR…KGTPAPLPNG (83 aa). 4 positions are modified to phosphoserine: Ser901, Ser909, Ser914, and Ser935. Residues 925–950 show a composition bias toward pro residues; sequence PQEPPPGPPPSPAAAPEAVPPPPAPP. Residues 968–1001 form a CCHC FOG-type 5 zinc finger; sequence LPNGNHRYCRLCNIKFSSLSTFIAHKKYYCSSHA. Zn(2+) is bound by residues Cys976, Cys979, His992, and Cys997.

The protein belongs to the FOG (Friend of GATA) family. As to quaternary structure, interacts with corepressor CTBP2; this interaction is however not essential for corepressor activity. Interacts with the N-terminal zinc-finger of GATA1, GATA2 and probably GATA3. In terms of tissue distribution, mainly expressed in hematopoietic tissues. Also expressed in adult cerebellum, stomach, lymph node, liver and pancreas. Expressed in fetal heart, liver and spleen.

It localises to the nucleus. Functionally, transcription regulator that plays an essential role in erythroid and megakaryocytic cell differentiation. Essential cofactor that acts via the formation of a heterodimer with transcription factors of the GATA family GATA1, GATA2 and GATA3. Such heterodimer can both activate or repress transcriptional activity, depending on the cell and promoter context. The heterodimer formed with GATA proteins is essential to activate expression of genes such as NFE2, ITGA2B, alpha- and beta-globin, while it represses expression of KLF1. May be involved in regulation of some genes in gonads. May also be involved in cardiac development, in a non-redundant way with ZFPM2/FOG2. The chain is Zinc finger protein ZFPM1 (ZFPM1) from Homo sapiens (Human).